We begin with the raw amino-acid sequence, 71 residues long: uncharacterized protein (71 aa).

This is an uncharacterized protein from Vaccinia virus (strain Western Reserve) (VACV).